Here is a 988-residue protein sequence, read N- to C-terminus: Exportin-T (988 aa).

It belongs to the exportin family. As to expression, expressed in young leaves, growing leaf blades, young floral organs and root tips.

It is found in the nucleus. It localises to the cytoplasm. In terms of biological role, probable tRNA nucleus export receptor which regulates tRNA processing and facilitates tRNA translocation across the nuclear pore complex. Is required for proper activity of the shoot apical meristem (SAM) and correct leaf initiation at different developmental stages, and may play a role in floral patterning. This Arabidopsis thaliana (Mouse-ear cress) protein is Exportin-T (PSD).